The following is an 86-amino-acid chain: Acyl carrier protein (86 aa).

The 81-residue stretch at 2–82 folds into the Carrier domain; sequence ATVFERVKKV…AVVDYLKSKG (81 aa). Position 37 is an O-(pantetheine 4'-phosphoryl)serine (Ser37).

The protein belongs to the acyl carrier protein (ACP) family. In terms of processing, 4'-phosphopantetheine is transferred from CoA to a specific serine of apo-ACP by AcpS. This modification is essential for activity because fatty acids are bound in thioester linkage to the sulfhydryl of the prosthetic group.

The protein localises to the cytoplasm. Its pathway is lipid metabolism; fatty acid biosynthesis. In terms of biological role, carrier of the growing fatty acid chain in fatty acid biosynthesis. The chain is Acyl carrier protein from Dehalococcoides mccartyi (strain ATCC BAA-2266 / KCTC 15142 / 195) (Dehalococcoides ethenogenes (strain 195)).